A 270-amino-acid polypeptide reads, in one-letter code: Formamidopyrimidine-DNA glycosylase (270 aa).

Residue proline 2 is the Schiff-base intermediate with DNA of the active site. The Proton donor role is filled by glutamate 3. The active-site Proton donor; for beta-elimination activity is lysine 58. DNA-binding residues include histidine 90 and arginine 109. Residues 237 to 270 (KVYGKEGEQCECGHTIERYTLGGRSTFLCSSCQK) form an FPG-type zinc finger. Arginine 260 acts as the Proton donor; for delta-elimination activity in catalysis.

This sequence belongs to the FPG family. As to quaternary structure, monomer. Zn(2+) serves as cofactor.

It carries out the reaction Hydrolysis of DNA containing ring-opened 7-methylguanine residues, releasing 2,6-diamino-4-hydroxy-5-(N-methyl)formamidopyrimidine.. It catalyses the reaction 2'-deoxyribonucleotide-(2'-deoxyribose 5'-phosphate)-2'-deoxyribonucleotide-DNA = a 3'-end 2'-deoxyribonucleotide-(2,3-dehydro-2,3-deoxyribose 5'-phosphate)-DNA + a 5'-end 5'-phospho-2'-deoxyribonucleoside-DNA + H(+). Its function is as follows. Involved in base excision repair of DNA damaged by oxidation or by mutagenic agents. Acts as a DNA glycosylase that recognizes and removes damaged bases. Has a preference for oxidized purines, such as 7,8-dihydro-8-oxoguanine (8-oxoG). Has AP (apurinic/apyrimidinic) lyase activity and introduces nicks in the DNA strand. Cleaves the DNA backbone by beta-delta elimination to generate a single-strand break at the site of the removed base with both 3'- and 5'-phosphates. The polypeptide is Formamidopyrimidine-DNA glycosylase (mutM) (Zymomonas mobilis subsp. mobilis (strain ATCC 31821 / ZM4 / CP4)).